The sequence spans 87 residues: NAD(P)H-quinone oxidoreductase subunit O (87 aa).

Residues 1–10 (MSEQTGKVDD) are compositionally biased toward basic and acidic residues. Positions 1 to 23 (MSEQTGKVDDSQSPPKVQKKLRK) are disordered.

This sequence belongs to the complex I NdhO subunit family. In terms of assembly, NDH-1 can be composed of about 15 different subunits; different subcomplexes with different compositions have been identified which probably have different functions.

It localises to the cellular thylakoid membrane. The catalysed reaction is a plastoquinone + NADH + (n+1) H(+)(in) = a plastoquinol + NAD(+) + n H(+)(out). It catalyses the reaction a plastoquinone + NADPH + (n+1) H(+)(in) = a plastoquinol + NADP(+) + n H(+)(out). Functionally, NDH-1 shuttles electrons from an unknown electron donor, via FMN and iron-sulfur (Fe-S) centers, to quinones in the respiratory and/or the photosynthetic chain. The immediate electron acceptor for the enzyme in this species is believed to be plastoquinone. Couples the redox reaction to proton translocation, and thus conserves the redox energy in a proton gradient. Cyanobacterial NDH-1 also plays a role in inorganic carbon-concentration. The polypeptide is NAD(P)H-quinone oxidoreductase subunit O (Prochlorococcus marinus (strain NATL2A)).